The primary structure comprises 460 residues: 3-isopropylmalate dehydratase large subunit (460 aa).

Positions 338, 398, and 401 each coordinate [4Fe-4S] cluster.

This sequence belongs to the aconitase/IPM isomerase family. LeuC type 1 subfamily. As to quaternary structure, heterodimer of LeuC and LeuD. [4Fe-4S] cluster is required as a cofactor.

It catalyses the reaction (2R,3S)-3-isopropylmalate = (2S)-2-isopropylmalate. Its pathway is amino-acid biosynthesis; L-leucine biosynthesis; L-leucine from 3-methyl-2-oxobutanoate: step 2/4. Functionally, catalyzes the isomerization between 2-isopropylmalate and 3-isopropylmalate, via the formation of 2-isopropylmaleate. The sequence is that of 3-isopropylmalate dehydratase large subunit from Streptococcus sanguinis (strain SK36).